We begin with the raw amino-acid sequence, 252 residues long: Imidazole glycerol phosphate synthase subunit HisF (252 aa).

Catalysis depends on residues D12 and D131.

Belongs to the HisA/HisF family. As to quaternary structure, heterodimer of HisH and HisF.

It localises to the cytoplasm. It catalyses the reaction 5-[(5-phospho-1-deoxy-D-ribulos-1-ylimino)methylamino]-1-(5-phospho-beta-D-ribosyl)imidazole-4-carboxamide + L-glutamine = D-erythro-1-(imidazol-4-yl)glycerol 3-phosphate + 5-amino-1-(5-phospho-beta-D-ribosyl)imidazole-4-carboxamide + L-glutamate + H(+). It participates in amino-acid biosynthesis; L-histidine biosynthesis; L-histidine from 5-phospho-alpha-D-ribose 1-diphosphate: step 5/9. IGPS catalyzes the conversion of PRFAR and glutamine to IGP, AICAR and glutamate. The HisF subunit catalyzes the cyclization activity that produces IGP and AICAR from PRFAR using the ammonia provided by the HisH subunit. The chain is Imidazole glycerol phosphate synthase subunit HisF from Thermus thermophilus (strain ATCC BAA-163 / DSM 7039 / HB27).